The chain runs to 131 residues: Fluoride-specific ion channel FluC (131 aa).

4 helical membrane passes run 4 to 24, 30 to 50, 68 to 88, and 104 to 124; these read LWIM…TGFV, GIFP…IGFF, LFVM…SLQT, and IALS…VAVA. The Na(+) site is built by Gly76 and Thr79.

The protein belongs to the fluoride channel Fluc/FEX (TC 1.A.43) family.

The protein localises to the cell inner membrane. It carries out the reaction fluoride(in) = fluoride(out). With respect to regulation, na(+) is not transported, but it plays an essential structural role and its presence is essential for fluoride channel function. Its function is as follows. Fluoride-specific ion channel. Important for reducing fluoride concentration in the cell, thus reducing its toxicity. The protein is Fluoride-specific ion channel FluC of Methylocella silvestris (strain DSM 15510 / CIP 108128 / LMG 27833 / NCIMB 13906 / BL2).